We begin with the raw amino-acid sequence, 287 residues long: ATP synthase gamma chain (287 aa).

It belongs to the ATPase gamma chain family. In terms of assembly, F-type ATPases have 2 components, CF(1) - the catalytic core - and CF(0) - the membrane proton channel. CF(1) has five subunits: alpha(3), beta(3), gamma(1), delta(1), epsilon(1). CF(0) has three main subunits: a, b and c.

It is found in the cell inner membrane. Functionally, produces ATP from ADP in the presence of a proton gradient across the membrane. The gamma chain is believed to be important in regulating ATPase activity and the flow of protons through the CF(0) complex. This is ATP synthase gamma chain from Xylella fastidiosa (strain 9a5c).